A 598-amino-acid polypeptide reads, in one-letter code: Chaperone protein DnaK (598 aa).

Threonine 175 bears the Phosphothreonine; by autocatalysis mark. The segment covering 571-591 has biased composition (low complexity); it reads AKSAAASSNKDDSLNNNSSSN. The interval 571 to 598 is disordered; that stretch reads AKSAAASSNKDDSLNNNSSSNNDEETFE.

It belongs to the heat shock protein 70 family.

Functionally, acts as a chaperone. The polypeptide is Chaperone protein DnaK (Mycoplasmopsis agalactiae (strain NCTC 10123 / CIP 59.7 / PG2) (Mycoplasma agalactiae)).